Consider the following 309-residue polypeptide: Probable nitrogen assimilation transcriptional activator (309 aa).

In terms of domain architecture, HTH lysR-type spans 1–57; that stretch reads MRLEQLQAALRVAETGSFQEAAQKVGCNQSTISRQVKGLEDELGIALFRRQGRMKLT. The H-T-H motif DNA-binding region spans 18–37; sequence FQEAAQKVGCNQSTISRQVK.

This sequence belongs to the LysR transcriptional regulatory family.

Functionally, seems to regulate utilization of fixed nitrogen by controlling the expression of a certain gene(s) involved in nitrogen metabolism. The sequence is that of Probable nitrogen assimilation transcriptional activator (ntcB) from Synechococcus elongatus (strain ATCC 33912 / PCC 7942 / FACHB-805) (Anacystis nidulans R2).